The chain runs to 239 residues: Glandular kallikrein, prostatic (239 aa).

The 236-residue stretch at Val-1 to Ala-236 folds into the Peptidase S1 domain. Cystine bridges form between Cys-7/Cys-151, Cys-26/Cys-42, Cys-128/Cys-197, Cys-162/Cys-176, and Cys-187/Cys-212. His-41 functions as the Charge relay system in the catalytic mechanism. The N-linked (GlcNAc...) asparagine glycan is linked to Asn-78. Asp-96 acts as the Charge relay system in catalysis. The N-linked (GlcNAc...) asparagine glycan is linked to Asn-169. The active-site Charge relay system is the Ser-191.

This sequence belongs to the peptidase S1 family. Kallikrein subfamily.

It carries out the reaction Preferential cleavage of Arg-|-Xaa bonds in small molecule substrates. Highly selective action to release kallidin (lysyl-bradykinin) from kininogen involves hydrolysis of Met-|-Xaa or Leu-|-Xaa.. Its function is as follows. Glandular kallikreins cleave Met-Lys and Arg-Ser bonds in kininogen to release Lys-bradykinin. In Cavia porcellus (Guinea pig), this protein is Glandular kallikrein, prostatic.